We begin with the raw amino-acid sequence, 277 residues long: Antigen 1 (277 aa).

The N-terminal stretch at 1–16 (MQLLALTLALCASIAA) is a signal peptide. Asn-41, Asn-71, Asn-127, and Asn-200 each carry an N-linked (GlcNAc...) asparagine glycan. Residues 230-277 (CVGGEEENDGQGEEQTEEPAQDDQQDEAAEEEIPENCHTHEGGELHCT) are disordered. Over residues 233–263 (GEEENDGQGEEQTEEPAQDDQQDEAAEEEIP) the composition is skewed to acidic residues. The span at 264-277 (ENCHTHEGGELHCT) shows a compositional bias: basic and acidic residues.

The protein belongs to the ZPS1 family.

The protein is Antigen 1 (aspnd1) of Emericella nidulans (strain FGSC A4 / ATCC 38163 / CBS 112.46 / NRRL 194 / M139) (Aspergillus nidulans).